Consider the following 431-residue polypeptide: Glutamate--tRNA ligase 1 (431 aa).

The 'HIGH' region signature appears at 6-16; that stretch reads PSPTGDMHIGN. Residues 235 to 239 carry the 'KMSKS' region motif; that stretch reads KMSKR. K238 contacts ATP.

This sequence belongs to the class-I aminoacyl-tRNA synthetase family. Glutamate--tRNA ligase type 1 subfamily. Monomer.

It is found in the cytoplasm. The catalysed reaction is tRNA(Glu) + L-glutamate + ATP = L-glutamyl-tRNA(Glu) + AMP + diphosphate. Functionally, catalyzes the attachment of glutamate to tRNA(Glu) in a two-step reaction: glutamate is first activated by ATP to form Glu-AMP and then transferred to the acceptor end of tRNA(Glu). The sequence is that of Glutamate--tRNA ligase 1 from Nitratiruptor sp. (strain SB155-2).